A 166-amino-acid polypeptide reads, in one-letter code: Cyclic pyranopterin monophosphate synthase (166 aa).

Substrate-binding positions include 83-85 and 121-122; these read LCH and ME. Aspartate 136 is an active-site residue.

This sequence belongs to the MoaC family. As to quaternary structure, homohexamer; trimer of dimers.

It carries out the reaction (8S)-3',8-cyclo-7,8-dihydroguanosine 5'-triphosphate = cyclic pyranopterin phosphate + diphosphate. It functions in the pathway cofactor biosynthesis; molybdopterin biosynthesis. Catalyzes the conversion of (8S)-3',8-cyclo-7,8-dihydroguanosine 5'-triphosphate to cyclic pyranopterin monophosphate (cPMP). This Rhodospirillum rubrum (strain ATCC 11170 / ATH 1.1.1 / DSM 467 / LMG 4362 / NCIMB 8255 / S1) protein is Cyclic pyranopterin monophosphate synthase.